We begin with the raw amino-acid sequence, 568 residues long: Glycine--tRNA ligase (568 aa).

Substrate is bound by residues Arg97 and Glu163. Residues Arg195–Glu197, Ile205–Phe210, Glu322–Cys323, and Gly441–Arg444 contribute to the ATP site. Phe210–Glu214 contributes to the substrate binding site. Glu437 to Gly441 is a binding site for substrate.

Belongs to the class-II aminoacyl-tRNA synthetase family.

The protein localises to the cytoplasm. It catalyses the reaction tRNA(Gly) + glycine + ATP = glycyl-tRNA(Gly) + AMP + diphosphate. In terms of biological role, catalyzes the attachment of glycine to tRNA(Gly). The polypeptide is Glycine--tRNA ligase (Pyrococcus furiosus (strain ATCC 43587 / DSM 3638 / JCM 8422 / Vc1)).